A 344-amino-acid polypeptide reads, in one-letter code: GTPase Obg (344 aa).

Residues M1 to I159 enclose the Obg domain. The disordered stretch occupies residues G126–D146. A compositionally biased stretch (polar residues) spans F130–G144. Residues A160–S327 enclose the OBG-type G domain. Residues G166 to S173, F191 to H195, D212 to G215, N279 to D282, and S308 to V310 contribute to the GTP site. S173 and T193 together coordinate Mg(2+).

It belongs to the TRAFAC class OBG-HflX-like GTPase superfamily. OBG GTPase family. In terms of assembly, monomer. Requires Mg(2+) as cofactor.

Its subcellular location is the cytoplasm. Its function is as follows. An essential GTPase which binds GTP, GDP and possibly (p)ppGpp with moderate affinity, with high nucleotide exchange rates and a fairly low GTP hydrolysis rate. Plays a role in control of the cell cycle, stress response, ribosome biogenesis and in those bacteria that undergo differentiation, in morphogenesis control. The protein is GTPase Obg of Roseobacter denitrificans (strain ATCC 33942 / OCh 114) (Erythrobacter sp. (strain OCh 114)).